We begin with the raw amino-acid sequence, 650 residues long: MLLHINPAYLFKLLHGFPPWIMPTDGNLGDKNFQMGKPGHREGATMHVKKYLLKGLHRLQKGPGYTYKELLVWYCDNTNTHGPKRIICEGPKKKAMWFLLTLLFTALVCWQWGIFIRTYLSWEVSVSLSVGFKTMDFPAVTICNASPFKYSKIKHLLKDLDELMEAVLERILAPELSHANATRNLNFSIWNHTPLVLIDERNPHHPMVLDLFGDNHNGLTRSSASEKICNAHGCKMAMRLCSLNGTQCTFRNFTSATQAVTEWYILQATNIFAQVPQQELVEMSYPGEQMILACLFGAEPCNYRNFTSIFYPHYGNCYIFNWGMTEKALPSANPGTEFGLKLILDIGQEDYVPFLASTAGVRLMLHEQRSYPFIRDEGIYAMSGTETSIGVLVDKLQRMGEPYSPCTVNGSEVPVQNFYSDYNTTYSIQDFDWAHCYSDLQMSVAQRETCIGMCKESCNDTQYKMTISMADWPSEASEDWIFHVLSQERDQSTNITLSRKGIVKLNIYFQEFNYRTIEESAANNIVWLLSNLGGQFGFWMGGSVLCLIEFGEIIIDFVWITIIKLVALAKSLRQRRAQASYAGPPPTVAELVEAHTNFGFQPDTAPRSPNTGPYPNEQALPIPGTPPPNYDSLRLQPLDVIESDSEGDAI.

Residues Met-1–Ala-95 lie on the Cytoplasmic side of the membrane. A helical membrane pass occupies residues Met-96–Ile-116. At Arg-117–Gly-542 the chain is on the extracellular side. 5 disulfides stabilise this stretch: Cys-143–Cys-317, Cys-229–Cys-234, Cys-241–Cys-248, Cys-294–Cys-301, and Cys-406–Cys-458. Asn-244 is a glycosylation site (N-linked (GlcNAc...) asparagine). Residue Asn-305 is glycosylated (N-linked (GlcNAc...) asparagine). Residues Ser-543–Ile-563 form a helical membrane-spanning segment. At Lys-564–Ile-650 the chain is on the cytoplasmic side. The segment at Phe-600–Ile-650 is disordered. Positions Pro-626–Tyr-630 match the PY motif; recruits WW domain-containing proteins and is thereby required for ubiquitination and inhibition of the channel by NEDD4 and NEDD4L motif. The segment covering Ile-641–Ile-650 has biased composition (acidic residues). Ser-643 and Ser-645 each carry phosphoserine.

It belongs to the amiloride-sensitive sodium channel (TC 1.A.6) family. SCNN1B subfamily. In terms of assembly, component of the heterotrimeric epithelial sodium channel (ENaC) composed of an alpha/SCNN1A, a beta/SCNN1B and a gamma/SCNN1G subunit. An additional delta/SCNN1D subunit can replace the alpha/SCNN1A subunit to form an alternative channel with specific properties. Interacts with WWP1 (via WW domains). Interacts with WWP2 (via WW domains); inhibits the channel. Interacts with the full-length immature form of PCSK9 (pro-PCSK9). Interacts (N-glycosylated) with BPIFA1; the interaction is direct and inhibits the proteolytic processing of SCNN1A and SCNN1G and the activation of ENaC. In terms of processing, ubiquitinated. Can be ubiquitinated at multiple sites and undergo monoubiquitination and polyubiquitination. Ubiquitination by NEDD4 or NEDD4L inhibits the ENaC channel through endocytosis, intracellular retention and degradation of its individual subunits. However, some studies could not confirm the ubiquitination of this subunit of the ENaC. Phosphorylated on serine and threonine residues. Aldosterone and insulin increase the basal level of phosphorylation. Post-translationally, N-glycosylated. N-glycosylation is required for interaction with BPIFA1.

It is found in the apical cell membrane. The protein resides in the cytoplasmic vesicle membrane. The catalysed reaction is Na(+)(in) = Na(+)(out). With respect to regulation, originally identified and characterized by its inhibition by the diuretic drug amiloride. Functionally, this is one of the three pore-forming subunits of the heterotrimeric epithelial sodium channel (ENaC), a critical regulator of sodium balance and fluid homeostasis. ENaC operates in epithelial tissues, where it mediates the electrodiffusion of sodium ions from extracellular fluid through the apical membrane of cells, with water following osmotically. It plays a key role in maintaining sodium homeostasis through electrogenic sodium reabsorption in the kidneys. Additionally, ENaC is essential for airway surface liquid homeostasis, which is crucial for proper mucus clearance. The sequence is that of Epithelial sodium channel subunit beta from Pan troglodytes (Chimpanzee).